A 281-amino-acid polypeptide reads, in one-letter code: MSDTVSVETVASAIDALRDQVPLVQSLTNIVSANFLTNVLLAAGASNAHIDNVHEAGGFAAVAGGVLVNLGTPDDGTAEAFLISAEAARTAGTPWVLDPVGVGGLPWRSGIAVDLLRFHPSAIRGNASEIIALAGLGGDTRGVDSASDSADAVPAALSLLTHADAVSASGPVDYIVGRDGGGDVRGIRVSGGSALLPRVTSTGCSLGGLVAAYLAVTPTALDGLVAAHTHVAVASEIAEENASGPGSFAVAYLDALYTVNADTIRSRARIESFDLPAGVQN.

2 residues coordinate ATP: Arg124 and Ser169.

Belongs to the Thz kinase family. Requires Mg(2+) as cofactor.

The enzyme catalyses 5-(2-hydroxyethyl)-4-methylthiazole + ATP = 4-methyl-5-(2-phosphooxyethyl)-thiazole + ADP + H(+). It participates in cofactor biosynthesis; thiamine diphosphate biosynthesis; 4-methyl-5-(2-phosphoethyl)-thiazole from 5-(2-hydroxyethyl)-4-methylthiazole: step 1/1. Its function is as follows. Catalyzes the phosphorylation of the hydroxyl group of 4-methyl-5-beta-hydroxyethylthiazole (THZ). The protein is Hydroxyethylthiazole kinase of Rhodococcus erythropolis (strain PR4 / NBRC 100887).